Reading from the N-terminus, the 270-residue chain is Regulatory protein RecX (270 aa).

Belongs to the RecX family.

The protein localises to the cytoplasm. In terms of biological role, modulates RecA activity. The polypeptide is Regulatory protein RecX (Bacillus cereus (strain ZK / E33L)).